A 251-amino-acid chain; its full sequence is Pyrroline-5-carboxylate reductase (251 aa).

This sequence belongs to the pyrroline-5-carboxylate reductase family.

The protein localises to the cytoplasm. The enzyme catalyses L-proline + NADP(+) = (S)-1-pyrroline-5-carboxylate + NADPH + 2 H(+). It catalyses the reaction L-proline + NAD(+) = (S)-1-pyrroline-5-carboxylate + NADH + 2 H(+). Its pathway is amino-acid biosynthesis; L-proline biosynthesis; L-proline from L-glutamate 5-semialdehyde: step 1/1. Its function is as follows. Catalyzes the reduction of 1-pyrroline-5-carboxylate (PCA) to L-proline. This chain is Pyrroline-5-carboxylate reductase (proC), found in Methanobrevibacter smithii.